Consider the following 330-residue polypeptide: DNA-directed RNA polymerase subunit alpha (330 aa).

The tract at residues 1–236 (MQGSVTEFLK…EQLDAFVDLR (236 aa)) is alpha N-terminal domain (alpha-NTD). Positions 250–330 (FDPILLRPVD…NWPPASIAED (81 aa)) are alpha C-terminal domain (alpha-CTD).

Belongs to the RNA polymerase alpha chain family. Homodimer. The RNAP catalytic core consists of 2 alpha, 1 beta, 1 beta' and 1 omega subunit. When a sigma factor is associated with the core the holoenzyme is formed, which can initiate transcription.

It carries out the reaction RNA(n) + a ribonucleoside 5'-triphosphate = RNA(n+1) + diphosphate. Its function is as follows. DNA-dependent RNA polymerase catalyzes the transcription of DNA into RNA using the four ribonucleoside triphosphates as substrates. The protein is DNA-directed RNA polymerase subunit alpha of Vibrio parahaemolyticus serotype O3:K6 (strain RIMD 2210633).